The sequence spans 206 residues: Eukaryotic translation initiation factor isoform 4E-2 (206 aa).

Residues Cys103 and Cys142 are joined by a disulfide bond.

The protein belongs to the eukaryotic initiation factor 4E family. In terms of assembly, EIF4F is a multi-subunit complex, the composition of which varies with external and internal environmental conditions. It is composed of at least EIF4A, EIF4E and EIF4G. EIF4E is also known to interact with other partners. In higher plants two isoforms of EIF4F have been identified, named isoform EIF4F and isoform EIF(iso)4F. Isoform EIF4F has subunits p220 and p26, whereas isoform EIF(iso)4F has subunits p82 and p28. In terms of processing, according to the redox status, the Cys-103-Cys-142 disulfide bridge may have a role in regulating protein function by affecting its ability to bind capped mRNA.

In terms of biological role, recognizes and binds the 7-methylguanosine-containing mRNA cap during an early step in the initiation of protein synthesis and facilitates ribosome binding by inducing the unwinding of the mRNAs secondary structures. The sequence is that of Eukaryotic translation initiation factor isoform 4E-2 from Oryza sativa subsp. japonica (Rice).